A 266-amino-acid polypeptide reads, in one-letter code: Tryptophan synthase alpha chain (266 aa).

Catalysis depends on proton acceptor residues Glu-47 and Asp-58.

It belongs to the TrpA family. In terms of assembly, tetramer of two alpha and two beta chains.

It is found in the plastid. Its subcellular location is the chloroplast. The enzyme catalyses (1S,2R)-1-C-(indol-3-yl)glycerol 3-phosphate + L-serine = D-glyceraldehyde 3-phosphate + L-tryptophan + H2O. It participates in amino-acid biosynthesis; L-tryptophan biosynthesis; L-tryptophan from chorismate: step 5/5. Its function is as follows. The alpha subunit is responsible for the aldol cleavage of indoleglycerol phosphate to indole and glyceraldehyde 3-phosphate. The chain is Tryptophan synthase alpha chain from Cyanidium caldarium (Red alga).